Reading from the N-terminus, the 498-residue chain is L-xylulose/3-keto-L-gulonate kinase (498 aa).

The protein belongs to the FGGY kinase family. Homodimer.

The catalysed reaction is L-xylulose + ATP = L-xylulose 5-phosphate + ADP + H(+). It catalyses the reaction 3-dehydro-L-gulonate + ATP = 3-dehydro-L-gulonate 6-phosphate + ADP + H(+). Catalyzes the phosphorylation of L-xylulose and 3-keto-L-gulonate. Is involved in L-lyxose utilization via xylulose, and may also be involved in the utilization of 2,3-diketo-L-gulonate. This chain is L-xylulose/3-keto-L-gulonate kinase (lyx), found in Escherichia coli (strain K12).